Reading from the N-terminus, the 89-residue chain is Small ribosomal subunit protein uS15 (89 aa).

The protein belongs to the universal ribosomal protein uS15 family. As to quaternary structure, part of the 30S ribosomal subunit. Forms a bridge to the 50S subunit in the 70S ribosome, contacting the 23S rRNA.

In terms of biological role, one of the primary rRNA binding proteins, it binds directly to 16S rRNA where it helps nucleate assembly of the platform of the 30S subunit by binding and bridging several RNA helices of the 16S rRNA. Its function is as follows. Forms an intersubunit bridge (bridge B4) with the 23S rRNA of the 50S subunit in the ribosome. In Acidiphilium cryptum (strain JF-5), this protein is Small ribosomal subunit protein uS15.